The chain runs to 513 residues: Lysine--tRNA ligase (513 aa).

The segment covering 1 to 11 (MTEPTQPNAAQ) has biased composition (polar residues). Residues 1–22 (MTEPTQPNAAQPNVVPEVDDNK) form a disordered region. Residues Glu423 and Glu430 each contribute to the Mg(2+) site.

It belongs to the class-II aminoacyl-tRNA synthetase family. Homodimer. The cofactor is Mg(2+).

Its subcellular location is the cytoplasm. It carries out the reaction tRNA(Lys) + L-lysine + ATP = L-lysyl-tRNA(Lys) + AMP + diphosphate. This is Lysine--tRNA ligase from Paraburkholderia xenovorans (strain LB400).